We begin with the raw amino-acid sequence, 242 residues long: Methylthioribulose-1-phosphate dehydratase (242 aa).

Residues 1–23 (MTDQREEPQGSNDHLVRSSDPEH) are disordered. Cysteine 102 contacts substrate. Zn(2+) is bound by residues histidine 119 and histidine 121. Residue glutamate 148 is the Proton donor/acceptor of the active site. Histidine 204 contacts Zn(2+).

The protein belongs to the aldolase class II family. MtnB subfamily. Requires Zn(2+) as cofactor.

It localises to the cytoplasm. It catalyses the reaction 5-(methylsulfanyl)-D-ribulose 1-phosphate = 5-methylsulfanyl-2,3-dioxopentyl phosphate + H2O. The protein operates within amino-acid biosynthesis; L-methionine biosynthesis via salvage pathway; L-methionine from S-methyl-5-thio-alpha-D-ribose 1-phosphate: step 2/6. Catalyzes the dehydration of methylthioribulose-1-phosphate (MTRu-1-P) into 2,3-diketo-5-methylthiopentyl-1-phosphate (DK-MTP-1-P). The protein is Methylthioribulose-1-phosphate dehydratase of Uncinocarpus reesii (strain UAMH 1704).